We begin with the raw amino-acid sequence, 100 residues long: Urease subunit gamma (100 aa).

Belongs to the urease gamma subunit family. In terms of assembly, heterotrimer of UreA (gamma), UreB (beta) and UreC (alpha) subunits. Three heterotrimers associate to form the active enzyme.

Its subcellular location is the cytoplasm. It catalyses the reaction urea + 2 H2O + H(+) = hydrogencarbonate + 2 NH4(+). It functions in the pathway nitrogen metabolism; urea degradation; CO(2) and NH(3) from urea (urease route): step 1/1. This is Urease subunit gamma from Haemophilus influenzae (strain 86-028NP).